The following is a 386-amino-acid chain: Probable pectin lyase E (386 aa).

A signal peptide spans Met-1–Ala-16. Cys-77 and Cys-101 are joined by a disulfide. Asn-124 is a glycosylation site (N-linked (GlcNAc...) asparagine). Arg-251 is an active-site residue. An intrachain disulfide couples Cys-326 to Cys-334.

The protein belongs to the polysaccharide lyase 1 family.

It localises to the secreted. It catalyses the reaction Eliminative cleavage of (1-&gt;4)-alpha-D-galacturonan methyl ester to give oligosaccharides with 4-deoxy-6-O-methyl-alpha-D-galact-4-enuronosyl groups at their non-reducing ends.. In terms of biological role, pectinolytic enzymes consist of four classes of enzymes: pectin lyase, polygalacturonase, pectin methylesterase and rhamnogalacturonase. Among pectinolytic enzymes, pectin lyase is the most important in depolymerization of pectin, since it cleaves internal glycosidic bonds of highly methylated pectins. This is Probable pectin lyase E (pelE) from Aspergillus fumigatus (strain CBS 144.89 / FGSC A1163 / CEA10) (Neosartorya fumigata).